Here is a 577-residue protein sequence, read N- to C-terminus: Anthranilate synthase alpha subunit 1, chloroplastic (577 aa).

Residues 1 to 34 (MASLVLSLRIAPSTPPLGLGGGRFRGRRGAVACR) constitute a chloroplast transit peptide.

Belongs to the anthranilate synthase component I family. In terms of assembly, heterotetramer consisting of two non-identical subunits: a beta subunit and a large alpha subunit.

It localises to the plastid. It is found in the chloroplast. It catalyses the reaction chorismate + L-glutamine = anthranilate + pyruvate + L-glutamate + H(+). Its pathway is amino-acid biosynthesis; L-tryptophan biosynthesis; L-tryptophan from chorismate: step 1/5. Feedback inhibition by tryptophan. In terms of biological role, part of a heterotetrameric complex that catalyzes the two-step biosynthesis of anthranilate, an intermediate in the biosynthesis of L-tryptophan. In the first step, the glutamine-binding beta subunit of anthranilate synthase (AS) provides the glutamine amidotransferase activity which generates ammonia as a substrate that, along with chorismate, is used in the second step, catalyzed by the large alpha subunit of AS to produce anthranilate. This Oryza sativa subsp. indica (Rice) protein is Anthranilate synthase alpha subunit 1, chloroplastic (ASA1).